We begin with the raw amino-acid sequence, 218 residues long: Peroxynitrite isomerase 2 (218 aa).

The disordered stretch occupies residues 1 to 24; it reads MTPAGDTPERGSGDRAVAEAAERA. A compositionally biased stretch (basic and acidic residues) spans 7–24; that stretch reads TPERGSGDRAVAEAAERA. The GXWXGXG motif lies at 65–71; it reads GVWRGEG. Heme b contacts are provided by Lys181 and His208.

The protein belongs to the nitrobindin family. In terms of assembly, homodimer. The cofactor is heme b.

It catalyses the reaction peroxynitrite = nitrate. Its pathway is nitrogen metabolism. Heme-binding protein able to scavenge peroxynitrite and to protect free L-tyrosine against peroxynitrite-mediated nitration, by acting as a peroxynitrite isomerase that converts peroxynitrite to nitrate. Therefore, this protein likely plays a role in peroxynitrite sensing and in the detoxification of reactive nitrogen and oxygen species (RNS and ROS, respectively). Is able to bind nitric oxide (NO) in vitro, but may act as a sensor of peroxynitrite levels in vivo. The sequence is that of Peroxynitrite isomerase 2 from Mycolicibacterium smegmatis (strain ATCC 700084 / mc(2)155) (Mycobacterium smegmatis).